The chain runs to 92 residues: Ig kappa chain V region 3381 (92 aa).

Residues 1 to 23 (AFELTQTPASVEAAVGGTVTINC) are framework-1. The complementarity-determining-1 stretch occupies residues 24-34 (QASESISNWLA). Positions 35-49 (WYQQKPGQPXKLLIY) are framework-2. The complementarity-determining-2 stretch occupies residues 50 to 56 (KASTLAS). The interval 57-88 (GVSSRFKGSGSGTQFTLTISDLECADAATYYC) is framework-3. A complementarity-determining-3 region spans residues 89–92 (QSTD).

The sequence is that of Ig kappa chain V region 3381 from Oryctolagus cuniculus (Rabbit).